The sequence spans 237 residues: Uridylate kinase (237 aa).

12–15 (KLSG) contacts ATP. Positions 20-25 (GEDGLG) are involved in allosteric activation by GTP. Glycine 54 lines the UMP pocket. ATP is bound by residues glycine 55 and arginine 59. UMP contacts are provided by residues aspartate 74 and 135 to 142 (TGNPFFTT). ATP is bound by residues threonine 162, tyrosine 168, and aspartate 171.

This sequence belongs to the UMP kinase family. Homohexamer.

The protein localises to the cytoplasm. It carries out the reaction UMP + ATP = UDP + ADP. Its pathway is pyrimidine metabolism; CTP biosynthesis via de novo pathway; UDP from UMP (UMPK route): step 1/1. With respect to regulation, allosterically activated by GTP. Inhibited by UTP. Catalyzes the reversible phosphorylation of UMP to UDP. This chain is Uridylate kinase, found in Haemophilus influenzae (strain 86-028NP).